The following is a 183-amino-acid chain: Protein P7 (183 aa).

It is found in the host nucleus. May play a role in inhibition of the host immune system by counteracting the type I interferon response. The protein is Protein P7 of Gadus morhua (Atlantic cod).